A 56-amino-acid chain; its full sequence is Endoglucanase Cel5A (56 aa).

Glutamate 45 acts as the Nucleophile in catalysis.

It belongs to the glycosyl hydrolase 5 (cellulase A) family.

It localises to the secreted. The protein localises to the extracellular space. The catalysed reaction is Endohydrolysis of (1-&gt;4)-beta-D-glucosidic linkages in cellulose, lichenin and cereal beta-D-glucans.. Has avicelase and carboxymethylcellulase activity. The sequence is that of Endoglucanase Cel5A from Gloeophyllum trabeum (Brown rot fungus).